We begin with the raw amino-acid sequence, 454 residues long: UPF0210 protein Mhun_2657 (454 aa).

It belongs to the UPF0210 family.

The chain is UPF0210 protein Mhun_2657 from Methanospirillum hungatei JF-1 (strain ATCC 27890 / DSM 864 / NBRC 100397 / JF-1).